The following is a 71-amino-acid chain: Protein Tlp homolog (71 aa).

The tract at residues 30–56 (ETLQNNSLSRDQRQAIMEKNKRREESI) is disordered. Residues 39 to 56 (RDQRQAIMEKNKRREESI) show a composition bias toward basic and acidic residues.

This sequence belongs to the Tlp family.

This Desulforamulus reducens (strain ATCC BAA-1160 / DSM 100696 / MI-1) (Desulfotomaculum reducens) protein is Protein Tlp homolog.